We begin with the raw amino-acid sequence, 276 residues long: NADPH-dependent 7-cyano-7-deazaguanine reductase (276 aa).

Residue 83-85 (IES) coordinates substrate. 85 to 86 (SK) is an NADPH binding site. The active-site Thioimide intermediate is the Cys184. The active-site Proton donor is Asp191. 223 to 224 (HE) is a binding site for substrate. 252-253 (RG) contributes to the NADPH binding site.

The protein belongs to the GTP cyclohydrolase I family. QueF type 2 subfamily. In terms of assembly, homodimer.

The protein resides in the cytoplasm. It catalyses the reaction 7-aminomethyl-7-carbaguanine + 2 NADP(+) = 7-cyano-7-deazaguanine + 2 NADPH + 3 H(+). It participates in tRNA modification; tRNA-queuosine biosynthesis. Functionally, catalyzes the NADPH-dependent reduction of 7-cyano-7-deazaguanine (preQ0) to 7-aminomethyl-7-deazaguanine (preQ1). The polypeptide is NADPH-dependent 7-cyano-7-deazaguanine reductase (Pseudomonas putida (strain W619)).